The sequence spans 186 residues: Glutathione peroxidase 7 (186 aa).

A signal peptide spans 1 to 18 (MVAARAAAWLLLAAAACA). The active site involves C56.

Belongs to the glutathione peroxidase family.

It localises to the secreted. The enzyme catalyses 2 glutathione + H2O2 = glutathione disulfide + 2 H2O. This Bos taurus (Bovine) protein is Glutathione peroxidase 7 (GPX7).